The primary structure comprises 117 residues: Large ribosomal subunit protein eL8 (117 aa).

This sequence belongs to the eukaryotic ribosomal protein eL8 family. As to quaternary structure, part of the 50S ribosomal subunit. Probably part of the RNase P complex.

Its subcellular location is the cytoplasm. Its function is as follows. Multifunctional RNA-binding protein that recognizes the K-turn motif in ribosomal RNA, the RNA component of RNase P, box H/ACA, box C/D and box C'/D' sRNAs. The polypeptide is Large ribosomal subunit protein eL8 (Methanocaldococcus jannaschii (strain ATCC 43067 / DSM 2661 / JAL-1 / JCM 10045 / NBRC 100440) (Methanococcus jannaschii)).